Here is a 474-residue protein sequence, read N- to C-terminus: 3-isopropylmalate dehydratase large subunit (474 aa).

[4Fe-4S] cluster is bound by residues Cys353, Cys414, and Cys417.

Belongs to the aconitase/IPM isomerase family. LeuC type 1 subfamily. In terms of assembly, heterodimer of LeuC and LeuD. Requires [4Fe-4S] cluster as cofactor.

It carries out the reaction (2R,3S)-3-isopropylmalate = (2S)-2-isopropylmalate. It participates in amino-acid biosynthesis; L-leucine biosynthesis; L-leucine from 3-methyl-2-oxobutanoate: step 2/4. In terms of biological role, catalyzes the isomerization between 2-isopropylmalate and 3-isopropylmalate, via the formation of 2-isopropylmaleate. The sequence is that of 3-isopropylmalate dehydratase large subunit from Xylella fastidiosa (strain M12).